The sequence spans 327 residues: L-lactate dehydrogenase (327 aa).

NAD(+)-binding positions include valine 18, aspartate 39, lysine 44, tyrosine 69, and 83 to 84 (GA). Residues glutamine 86, arginine 92, and 124 to 127 (NPVD) each bind substrate. NAD(+) is bound by residues 122–124 (AAN) and serine 147. 152–155 (DSAR) is a binding site for substrate. The beta-D-fructose 1,6-bisphosphate site is built by arginine 157 and histidine 172. Histidine 179 (proton acceptor) is an active-site residue. Tyrosine 224 is subject to Phosphotyrosine. Threonine 233 contributes to the substrate binding site.

Belongs to the LDH/MDH superfamily. LDH family. In terms of assembly, homotetramer.

The protein localises to the cytoplasm. It catalyses the reaction (S)-lactate + NAD(+) = pyruvate + NADH + H(+). Its pathway is fermentation; pyruvate fermentation to lactate; (S)-lactate from pyruvate: step 1/1. Allosterically activated by fructose 1,6-bisphosphate (FBP). In terms of biological role, catalyzes the conversion of lactate to pyruvate. This Streptococcus equi subsp. zooepidemicus (strain H70) protein is L-lactate dehydrogenase.